The sequence spans 302 residues: Deoxyhypusine hydroxylase (302 aa).

HEAT-like PBS-type repeat units lie at residues 23 to 49, 54 to 80, 87 to 113, 175 to 201, 206 to 232, and 239 to 265; these read ERFR…AFDD, LKHE…VLKD, VRHE…YKKD, DRYR…GLKD, FRHE…NLED, and VRHE…YADD. Residues His-56, Glu-57, His-89, and Glu-90 each coordinate Fe cation. Fe cation contacts are provided by His-208, Glu-209, His-241, and Glu-242.

The protein belongs to the deoxyhypusine hydroxylase family. The cofactor is Fe(2+).

The protein resides in the endoplasmic reticulum membrane. The enzyme catalyses [eIF5A protein]-deoxyhypusine + AH2 + O2 = [eIF5A protein]-hypusine + A + H2O. Its pathway is protein modification; eIF5A hypusination. Functionally, catalyzes the hydroxylation of the N(6)-(4-aminobutyl)-L-lysine intermediate to form hypusine, an essential post-translational modification only found in mature eIF-5A factor. Essential for organismal viability and plays a role in a wide number of important processes such as cell growth and proliferation, and regulates induction of autophagy and protein synthesis. Has a role in eIF-5A-mediated translational control. This chain is Deoxyhypusine hydroxylase, found in Drosophila pseudoobscura pseudoobscura (Fruit fly).